A 643-amino-acid polypeptide reads, in one-letter code: Sodium/iodide cotransporter (643 aa).

Topologically, residues 1 to 14 (MEAVETGERPTFGA) are extracellular. Residues 15-31 (WDYGVFALMLLVSTGIG) traverse the membrane as a helical segment. The Cytoplasmic portion of the chain corresponds to 32–56 (LWVGLARGGQRSAEDFFTGGRRLAA). Residues 57-80 (LPVGLSLSASFMSAVQVLGVPSEA) traverse the membrane as a discontinuously helical segment. Na(+)-binding residues include Ser69, Val71, and Gln72. Val76 serves as a coordination point for iodide. Topologically, residues 81 to 84 (YRYG) are extracellular. The chain crosses the membrane as a helical span at residues 85-105 (LKFLWMCLGQLLNSVLTALLF). Met90 is an iodide binding site. Over 106-130 (MPVFYRLGLTSTYEYLEMRFSRAVR) the chain is Cytoplasmic. The chain crosses the membrane as a helical span at residues 131–157 (LCGTLQYIVATMLYTGIVIYAPALILN). Tyr144 is a Na(+) binding site. Residues 158–163 (QVTGLD) lie on the Extracellular side of the membrane. The chain crosses the membrane as a helical span at residues 164–181 (IWASLLSTGIICTFYTAV). At 182–189 (GGMKAVVW) the chain is on the cytoplasmic side. Residues 190–208 (TDVFQVVVMLSGFWVVLAR) form a helical membrane-spanning segment. Over 209 to 243 (GVMLVGGPRQVLTLAQNHSRINLMDFNPDPRSRYT) the chain is Extracellular. Residues 244–266 (FWTFVVGGTLVWLSMYGVNQAQV) traverse the membrane as a discontinuously helical segment. Position 255 (Trp255) interacts with iodide. Position 258 (Met258) interacts with Na(+). At 267–278 (QRYVACRTEKQA) the chain is on the cytoplasmic side. A helical membrane pass occupies residues 279 to 301 (KLALLINQVGLFLIVSSAACCGI). The Extracellular portion of the chain corresponds to 302-335 (VMFVFYTDCDPLLLGRISAPDQYMPLLVLDIFED). A helical transmembrane segment spans residues 336–363 (LPGVPGLFLACAYSGTLSTASTSINAMA). Residues 364–386 (AVTVEDLIKPRLRSLAPRKLVII) are Cytoplasmic-facing. A helical membrane pass occupies residues 387-408 (SKGLSLIYGSACLTVAALSSLL). The Extracellular portion of the chain corresponds to 409 to 411 (GGG). A helical transmembrane segment spans residues 412–437 (VLQGSFTVMGVISGPLLGAFILGMFL). Leu413 contributes to the iodide binding site. Residues Ser416 and Phe417 each coordinate Na(+). Phe417 is an iodide binding site. The Cytoplasmic segment spans residues 438-441 (PACN). The helical transmembrane segment at 442–465 (TPGVLAGLGAGLALSLWVALGATL) threads the bilayer. The Extracellular portion of the chain corresponds to 466-525 (YPPSEQTMRVLPSSAARCVALSVNASGLLDPALLPANDSSRAPSSGMDASRPALADSFYA). 2 N-linked (GlcNAc...) asparagine glycosylation sites follow: Asn489 and Asn502. The chain crosses the membrane as a helical span at residues 526 to 550 (ISYLYYGALGTLTTVLCGALISCLT). The Cytoplasmic segment spans residues 551–643 (GPTKRSTLAP…GGRDQQETNL (93 aa)). Position 556 is a phosphoserine; by PKA (Ser556). The tract at residues 623–643 (AGSWTPCVGHDGGRDQQETNL) is disordered. Residues 633–643 (DGGRDQQETNL) are compositionally biased toward basic and acidic residues.

This sequence belongs to the sodium:solute symporter (SSF) (TC 2.A.21) family. In terms of assembly, monomer. In terms of processing, glycosylated. Expression is primarily in thyroid tissue, but also to a lower extent in mammary gland and ovary. Expression is reduced in tumors.

It is found in the cell membrane. It localises to the cytoplasm. It catalyses the reaction iodide(out) + 2 Na(+)(out) = iodide(in) + 2 Na(+)(in). The catalysed reaction is chlorate(out) + 2 Na(+)(out) = chlorate(in) + 2 Na(+)(in). It carries out the reaction thiocyanate(out) + 2 Na(+)(out) = thiocyanate(in) + 2 Na(+)(in). The enzyme catalyses nitrate(out) + 2 Na(+)(out) = nitrate(in) + 2 Na(+)(in). It catalyses the reaction selenocyanate(out) + 2 Na(+)(out) = selenocyanate(in) + 2 Na(+)(in). Its activity is regulated as follows. Dysidenin and perchlorate inhibit iodide transport activity. Oxyanions inhibit iodide transport activity by blocking the binding sites for iodide and one of the sodium ions. Sodium:iodide symporter that mediates the transport of iodide into the thyroid gland. Can also mediate the transport of chlorate, thiocynate, nitrate and selenocynate. In Homo sapiens (Human), this protein is Sodium/iodide cotransporter (SLC5A5).